A 443-amino-acid chain; its full sequence is Mitochondrial enolase superfamily member 1 (443 aa).

Substrate contacts are provided by residues 24–26 and tyrosine 34; that span reads GSD. The residue at position 148 (serine 148) is a Phosphoserine. Residue lysine 220 coordinates substrate. Residue lysine 222 is the Proton donor/acceptor of the active site. Aspartate 250 is a binding site for Mg(2+). Substrate-binding positions include asparagine 252, glutamate 276, glutamate 305, 355-357, and glutamate 386; that span reads HAG. The Mg(2+) site is built by glutamate 276 and glutamate 305. Histidine 355 is an active-site residue.

Belongs to the mandelate racemase/muconate lactonizing enzyme family. ENOSF1 subfamily. Mg(2+) is required as a cofactor. Post-translationally, could be sumoylated.

Its subcellular location is the mitochondrion. The enzyme catalyses L-fuconate = 2-dehydro-3-deoxy-L-fuconate + H2O. Functionally, plays a role in the catabolism of L-fucose, a sugar that is part of the carbohydrates that are attached to cellular glycoproteins. Catalyzes the dehydration of L-fuconate to 2-keto-3-deoxy-L-fuconate by the abstraction of the 2-proton to generate an enediolate intermediate that is stabilized by the magnesium ion. May down-regulate thymidylate synthase activity, possibly already at the RNA level, by promoting the degradation of TYMS mRNA via an antisense RNA-based mechanism. The polypeptide is Mitochondrial enolase superfamily member 1 (ENOSF1) (Bos taurus (Bovine)).